We begin with the raw amino-acid sequence, 162 residues long: Non-specific lipid transfer protein GPI-anchored 27 (162 aa).

The first 29 residues, 1–29, serve as a signal peptide directing secretion; that stretch reads MAYTNKVAVAVGAAVVFLAVVMNPRWTEA. 4 cysteine pairs are disulfide-bonded: Cys39–Cys78, Cys50–Cys62, Cys63–Cys102, and Cys76–Cys110. N-linked (GlcNAc...) asparagine glycosylation occurs at Asn68. N-linked (GlcNAc...) asparagine glycosylation is found at Asn124 and Asn135. Ser137 is lipidated: GPI-anchor amidated serine. Positions 138–162 are cleaved as a propeptide — removed in mature form; it reads VGGKNKVATSMSAFGLVAILLFVMF.

The protein belongs to the plant LTP family.

The protein resides in the cell membrane. In terms of biological role, probable lipid transfer protein. This chain is Non-specific lipid transfer protein GPI-anchored 27, found in Arabidopsis thaliana (Mouse-ear cress).